The primary structure comprises 100 residues: C-X-C motif chemokine 11 (100 aa).

The first 21 residues, 1-21 (MNRKVTAIALAAIIWATAAQG), serve as a signal peptide directing secretion. 2 cysteine pairs are disulfide-bonded: C30/C57 and C32/C74.

It belongs to the intercrine alpha (chemokine CxC) family. In terms of assembly, interacts with TNFAIP6 (via Link domain).

It localises to the secreted. Chemotactic for interleukin-activated T-cells but not unstimulated T-cells, neutrophils or monocytes. Induces calcium release in activated T-cells. Binds to CXCR3. May play an important role in CNS diseases which involve T-cell recruitment. May play a role in skin immune responses. The polypeptide is C-X-C motif chemokine 11 (Cxcl11) (Mus musculus (Mouse)).